Reading from the N-terminus, the 240-residue chain is MKRPSGRAADQLRSIRITRNYTKHAEGSVLVEFGDTKVICTVSVENGVPRFLKGQGQGWLTAEYGMLPRATGERNQREASRGKQGGRTLEIQRLIGRSLRAALDMSKLGDVTLYVDCDVIQADGGTRTASITGAMVALADALKVIKKRGGLKGGDPLKQMIAAVSVGMYQGEPVLDLDYLEDSAAETDLNVVMTSAGGFIEVQGTAEGAPFQPEELNAMLALAQKGMTELFELQRAALAD.

Phosphate contacts are provided by residues arginine 87 and 125-127 (GTR).

The protein belongs to the RNase PH family. Homohexameric ring arranged as a trimer of dimers.

The catalysed reaction is tRNA(n+1) + phosphate = tRNA(n) + a ribonucleoside 5'-diphosphate. Phosphorolytic 3'-5' exoribonuclease that plays an important role in tRNA 3'-end maturation. Removes nucleotide residues following the 3'-CCA terminus of tRNAs; can also add nucleotides to the ends of RNA molecules by using nucleoside diphosphates as substrates, but this may not be physiologically important. Probably plays a role in initiation of 16S rRNA degradation (leading to ribosome degradation) during starvation. The protein is Ribonuclease PH of Pseudomonas syringae pv. syringae (strain B728a).